Here is a 135-residue protein sequence, read N- to C-terminus: Transcriptional activator protein (135 aa).

A Nuclear localization signal motif is present at residues 17–32; that stretch reads KVTHRQVKKRAIRRRR. A zinc finger lies at 37-54; that stretch reads CGCSYYLHINCFNHGFTH. Residues 77 to 88 show a composition bias toward polar residues; that stretch reads VFHNHQAPTTTI. The disordered stretch occupies residues 77-117; it reads VFHNHQAPTTTIPAEPGHHNSPGSIQSQPEEGAGDSQMFSQ. Positions 120-135 are transactivation; sequence DLDNLTASDWSFLKGL.

It belongs to the geminiviridae transcriptional activator protein family. As to quaternary structure, monomer. Homodimer. Homooligomer. Self-interaction correlates with nuclear localization and efficient activation of transcription. Monomers suppress local silencing by interacting with and inactivating host adenosine kinase 2 (ADK2) in the cytoplasm. Interacts with and inhibits host SNF1 kinase. Binds to ssDNA. Post-translationally, phosphorylated.

Its subcellular location is the host nucleus. The protein localises to the host cytoplasm. Strong activator of the late viral genes promoters. Enhances the expression of the capsid protein and nuclear shuttle protein. Acts as a suppressor of RNA-mediated gene silencing, also known as post-transcriptional gene silencing (PTGS), a mechanism of plant viral defense that limits the accumulation of viral RNAs. Suppresses the host RNA silencing by inhibiting adenosine kinase 2 (ADK2), a kinase involved in a general methylation pathway. Also suppresses the host basal defense by interacting with and inhibiting SNF1 kinase, a key regulator of cell metabolism implicated in innate antiviral defense. Determines pathogenicity. This Hewittia sublobata (Coralbush) protein is Transcriptional activator protein.